The sequence spans 96 residues: Large ribosomal subunit protein eL43 (96 aa).

Residues 39–60 (CTFCGKTATKRTCVGIWKCKKC) form a C4-type zinc finger.

The protein belongs to the eukaryotic ribosomal protein eL43 family. Component of the large ribosomal subunit. Mature ribosomes consist of a small (40S) and a large (60S) subunit. The 40S subunit contains about 32 different proteins and 1 molecule of RNA (18S). The 60S subunit contains about 42 different proteins and 3 molecules of RNA (28S, 5.8S and 5S).

It is found in the cytoplasm. Its function is as follows. Component of the ribosome, a large ribonucleoprotein complex responsible for the synthesis of proteins in the cell. The small ribosomal subunit (SSU) binds messenger RNAs (mRNAs) and translates the encoded message by selecting cognate aminoacyl-transfer RNA (tRNA) molecules. The large subunit (LSU) contains the ribosomal catalytic site termed the peptidyl transferase center (PTC), which catalyzes the formation of peptide bonds, thereby polymerizing the amino acids delivered by tRNAs into a polypeptide chain. The nascent polypeptides leave the ribosome through a tunnel in the LSU and interact with protein factors that function in enzymatic processing, targeting, and the membrane insertion of nascent chains at the exit of the ribosomal tunnel. This is Large ribosomal subunit protein eL43 from Plasmodium falciparum (isolate 3D7).